A 363-amino-acid chain; its full sequence is Spermidine/putrescine import ATP-binding protein PotA (363 aa).

Positions 4–234 constitute an ABC transporter domain; that stretch reads LEIRNVTRRF…PRNHFVADFI (231 aa). Position 36-43 (36-43) interacts with ATP; sequence GPSGCGKT.

The protein belongs to the ABC transporter superfamily. Spermidine/putrescine importer (TC 3.A.1.11.1) family. In terms of assembly, the complex is composed of two ATP-binding proteins (PotA), two transmembrane proteins (PotB and PotC) and a solute-binding protein (PotD).

It localises to the cell inner membrane. The catalysed reaction is ATP + H2O + polyamine-[polyamine-binding protein]Side 1 = ADP + phosphate + polyamineSide 2 + [polyamine-binding protein]Side 1.. Functionally, part of the ABC transporter complex PotABCD involved in spermidine/putrescine import. Responsible for energy coupling to the transport system. The protein is Spermidine/putrescine import ATP-binding protein PotA of Nitrosospira multiformis (strain ATCC 25196 / NCIMB 11849 / C 71).